A 410-amino-acid chain; its full sequence is Histone-lysine N-methyltransferase SUV39H2 (410 aa).

One can recognise a Chromo domain in the interval 47 to 105 (YEVEYLCDYKVVKDMEYYLVKWKGWPDSTNTWEPLQNLKCPLLLQQFSNDKHNYLSQVK). A Pre-SET domain is found at 189 to 247 (FGCSCTDCFFQKCCPAEAGVLLAYNKNQQIKIPPGTPIYECNSRCQCGPDCPNRIVQKG). Residues cysteine 191, cysteine 193, cysteine 196, cysteine 201, cysteine 202, cysteine 229, cysteine 233, cysteine 235, and cysteine 239 each contribute to the Zn(2+) site. The SET domain occupies 250-373 (YSLCIFRTSN…AGEELTFDYQ (124 aa)). S-adenosyl-L-methionine contacts are provided by residues 261 to 263 (RGW), tyrosine 304, and 330 to 331 (NH). Zn(2+) is bound at residue cysteine 333. Residues serine 381, serine 384, and serine 388 each carry the phosphoserine modification. The Post-SET domain maps to 394-410 (VRTVCKCGAVTCRGYLN). Cysteine 398, cysteine 400, and cysteine 405 together coordinate Zn(2+).

The protein belongs to the class V-like SAM-binding methyltransferase superfamily. Histone-lysine methyltransferase family. Suvar3-9 subfamily. In terms of assembly, interacts with SMAD5. The large PER complex involved in the histone methylation is composed of at least PER2, CBX3, TRIM28, SUV39H1 and/or SUV39H2; CBX3 mediates the formation of the complex. Ubiquitinated by the DCX(DCAF13) E3 ubiquitin ligase complex, leading to its degradation.

Its subcellular location is the nucleus. The protein localises to the chromosome. It is found in the centromere. It catalyses the reaction L-lysyl(9)-[histone H3] + 3 S-adenosyl-L-methionine = N(6),N(6),N(6)-trimethyl-L-lysyl(9)-[histone H3] + 3 S-adenosyl-L-homocysteine + 3 H(+). Histone methyltransferase that specifically trimethylates 'Lys-9' of histone H3 using monomethylated H3 'Lys-9' as substrate. H3 'Lys-9' trimethylation represents a specific tag for epigenetic transcriptional repression by recruiting HP1 (CBX1, CBX3 and/or CBX5) proteins to methylated histones. Mainly functions in heterochromatin regions, thereby playing a central role in the establishment of constitutive heterochromatin at pericentric and telomere regions. H3 'Lys-9' trimethylation is also required to direct DNA methylation at pericentric repeats. SUV39H1 is targeted to histone H3 via its interaction with RB1 and is involved in many processes, such as cell cycle regulation, transcriptional repression and regulation of telomere length. May participate in regulation of higher-order chromatin organization during spermatogenesis. Recruited by the large PER complex to the E-box elements of the circadian target genes such as PER2 itself or PER1, contributes to the conversion of local chromatin to a heterochromatin-like repressive state through H3 'Lys-9' trimethylation. This chain is Histone-lysine N-methyltransferase SUV39H2 (SUV39H2), found in Macaca fascicularis (Crab-eating macaque).